The following is a 281-amino-acid chain: NADPH-dependent 7-cyano-7-deazaguanine reductase (281 aa).

89-91 contributes to the substrate binding site; the sequence is VES. 91-92 contacts NADPH; sequence SK. The active-site Thioimide intermediate is Cys-188. The active-site Proton donor is Asp-195. Residue 227–228 participates in substrate binding; sequence HE. 256–257 lines the NADPH pocket; that stretch reads RG.

Belongs to the GTP cyclohydrolase I family. QueF type 2 subfamily. As to quaternary structure, homodimer.

The protein localises to the cytoplasm. The enzyme catalyses 7-aminomethyl-7-carbaguanine + 2 NADP(+) = 7-cyano-7-deazaguanine + 2 NADPH + 3 H(+). The protein operates within tRNA modification; tRNA-queuosine biosynthesis. In terms of biological role, catalyzes the NADPH-dependent reduction of 7-cyano-7-deazaguanine (preQ0) to 7-aminomethyl-7-deazaguanine (preQ1). The chain is NADPH-dependent 7-cyano-7-deazaguanine reductase from Azoarcus sp. (strain BH72).